A 339-amino-acid chain; its full sequence is Centromere protein N (339 aa).

Phosphoserine occurs at positions 226, 235, and 282.

This sequence belongs to the CENP-N/CHL4 family. In terms of assembly, component of the CENPA-NAC complex, at least composed of CENPA, CENPC, CENPH, CENPM, CENPN, CENPT and CENPU. The CENPA-NAC complex interacts with the CENPA-CAD complex, composed of CENPI, CENPK, CENPL, CENPO, CENPP, CENPQ, CENPR and CENPS. Interacts directly with CENPA. Identified in a centromere complex containing histones H2A, H2B and H4, and at least CENPA, CENPB, CENPC, CENPT, CENPN, HJURP, SUPT16H, SSRP1 and RSF1.

Its subcellular location is the nucleus. The protein resides in the chromosome. The protein localises to the centromere. It is found in the kinetochore. Component of the CENPA-NAC (nucleosome-associated) complex, a complex that plays a central role in assembly of kinetochore proteins, mitotic progression and chromosome segregation. The CENPA-NAC complex recruits the CENPA-CAD (nucleosome distal) complex and may be involved in incorporation of newly synthesized CENPA into centromeres. CENPN is the first protein to bind specifically to CENPA nucleosomes and the direct binding of CENPA nucleosomes by CENPN is required for centromere assembly. Required for chromosome congression and efficiently align the chromosomes on a metaphase plate. This chain is Centromere protein N (CENPN), found in Homo sapiens (Human).